The sequence spans 1333 residues: Xanthine dehydrogenase/oxidase (1333 aa).

Positions 4 to 91 (DKLVFFVNGR…HVAVTTVEGI (88 aa)) constitute a 2Fe-2S ferredoxin-type domain. Residues C43, C48, C51, C73, C113, C116, C148, and C150 each contribute to the [2Fe-2S] cluster site. Positions 229 to 414 (FEGERVTWIQ…LSIEIPYSRE (186 aa)) constitute an FAD-binding PCMH-type domain. FAD contacts are provided by residues 257–264 (LVVGNTEI), F337, 347–351 (SVGGN), D360, L404, and K422. Disulfide bonds link C509–C1318 and C536–C993. Mo-molybdopterin is bound by residues Q768 and F799. E803 and R881 together coordinate substrate. Mo-molybdopterin is bound at residue R913. Residues F915 and T1011 each contribute to the substrate site. A1080 is a Mo-molybdopterin binding site. E1262 serves as the catalytic Proton acceptor.

It belongs to the xanthine dehydrogenase family. Homodimer. Interacts with BTN1A1. It depends on [2Fe-2S] cluster as a cofactor. FAD serves as cofactor. Requires Mo-molybdopterin as cofactor. Post-translationally, subject to partial proteolysis; this alters the enzyme from the dehydrogenase form (D) to the oxidase form (O). Contains sulfhydryl groups that are easily oxidized (in vitro); this alters the enzyme from the dehydrogenase form (D) to the oxidase form (O). As to expression, detected in milk (at protein level).

The protein resides in the cytoplasm. It localises to the peroxisome. It is found in the secreted. The catalysed reaction is xanthine + NAD(+) + H2O = urate + NADH + H(+). It catalyses the reaction hypoxanthine + NAD(+) + H2O = xanthine + NADH + H(+). It carries out the reaction xanthine + O2 + H2O = urate + H2O2. Can be converted from the dehydrogenase form (D) to the oxidase form (O) irreversibly by proteolysis or reversibly through the oxidation of sulfhydryl groups. Functionally, key enzyme in purine degradation. Catalyzes the oxidation of hypoxanthine to xanthine. Catalyzes the oxidation of xanthine to uric acid. Contributes to the generation of reactive oxygen species. Has also low oxidase activity towards aldehydes (in vitro). The sequence is that of Xanthine dehydrogenase/oxidase (XDH) from Homo sapiens (Human).